An 88-amino-acid chain; its full sequence is Kunitz-type kappaPI-theraphotoxin-Hs1b (88 aa).

The first 27 residues, 1 to 27, serve as a signal peptide directing secretion; that stretch reads MGIARILSAVLFLSVLFVVTFPALLSA. A propeptide spanning residues 28–33 is cleaved from the precursor; it reads DHHDGR. The BPTI/Kunitz inhibitor domain occupies 37-85; the sequence is CRLPSDRGRCKASFERWYFNGRTCAKFIYGGCGGNGNKFPTQEACMKRC. 3 cysteine pairs are disulfide-bonded: C37/C85, C46/C68, and C60/C81.

Belongs to the venom Kunitz-type family. 02 (native) subfamily. In terms of tissue distribution, expressed by the venom gland.

The protein resides in the secreted. Its function is as follows. Serine protease inhibitor that inhibits trypsin at a molar ratio of 1:1. In Cyriopagopus schmidti (Chinese bird spider), this protein is Kunitz-type kappaPI-theraphotoxin-Hs1b.